Consider the following 288-residue polypeptide: Quinate/shikimate dehydrogenase (288 aa).

Positions 71 and 107 each coordinate substrate. NAD(+)-binding positions include 132–135 (AGGA), 155–158 (NRRD), K205, 232–235 (CVYN), and G255.

Belongs to the shikimate dehydrogenase family. As to quaternary structure, homodimer.

It catalyses the reaction L-quinate + NAD(+) = 3-dehydroquinate + NADH + H(+). The catalysed reaction is L-quinate + NADP(+) = 3-dehydroquinate + NADPH + H(+). It carries out the reaction shikimate + NADP(+) = 3-dehydroshikimate + NADPH + H(+). The enzyme catalyses shikimate + NAD(+) = 3-dehydroshikimate + NADH + H(+). Its pathway is metabolic intermediate biosynthesis; chorismate biosynthesis; chorismate from D-erythrose 4-phosphate and phosphoenolpyruvate: step 4/7. Functionally, the actual biological function of YdiB remains unclear, nor is it known whether 3-dehydroshikimate or quinate represents the natural substrate. Catalyzes the reversible NAD-dependent reduction of both 3-dehydroshikimate (DHSA) and 3-dehydroquinate to yield shikimate (SA) and quinate, respectively. It can use both NAD or NADP for catalysis, however it has higher catalytic efficiency with NAD. The chain is Quinate/shikimate dehydrogenase from Escherichia coli (strain 55989 / EAEC).